The sequence spans 226 residues: Large ribosomal subunit protein uL1 (226 aa).

Belongs to the universal ribosomal protein uL1 family. Part of the 50S ribosomal subunit.

In terms of biological role, binds directly to 23S rRNA. The L1 stalk is quite mobile in the ribosome, and is involved in E site tRNA release. Its function is as follows. Protein L1 is also a translational repressor protein, it controls the translation of the L11 operon by binding to its mRNA. This is Large ribosomal subunit protein uL1 from Treponema pallidum (strain Nichols).